A 116-amino-acid polypeptide reads, in one-letter code: DNA-directed RNA polymerase subunit omega (116 aa).

The protein belongs to the RNA polymerase subunit omega family. In terms of assembly, the RNAP catalytic core consists of 2 alpha, 1 beta, 1 beta' and 1 omega subunit. When a sigma factor is associated with the core the holoenzyme is formed, which can initiate transcription.

The catalysed reaction is RNA(n) + a ribonucleoside 5'-triphosphate = RNA(n+1) + diphosphate. Promotes RNA polymerase assembly. Latches the N- and C-terminal regions of the beta' subunit thereby facilitating its interaction with the beta and alpha subunits. The protein is DNA-directed RNA polymerase subunit omega of Hyphomonas neptunium (strain ATCC 15444).